A 139-amino-acid polypeptide reads, in one-letter code: Transcription antitermination protein NusB (139 aa).

This sequence belongs to the NusB family.

Functionally, involved in transcription antitermination. Required for transcription of ribosomal RNA (rRNA) genes. Binds specifically to the boxA antiterminator sequence of the ribosomal RNA (rrn) operons. The sequence is that of Transcription antitermination protein NusB from Erwinia tasmaniensis (strain DSM 17950 / CFBP 7177 / CIP 109463 / NCPPB 4357 / Et1/99).